Reading from the N-terminus, the 291-residue chain is 4-diphosphocytidyl-2-C-methyl-D-erythritol kinase (291 aa).

Lys-10 is an active-site residue. Position 99-109 (99-109 (PMGGGLGGGSS)) interacts with ATP. The active site involves Asp-141.

This sequence belongs to the GHMP kinase family. IspE subfamily. Homodimer.

The catalysed reaction is 4-CDP-2-C-methyl-D-erythritol + ATP = 4-CDP-2-C-methyl-D-erythritol 2-phosphate + ADP + H(+). It participates in isoprenoid biosynthesis; isopentenyl diphosphate biosynthesis via DXP pathway; isopentenyl diphosphate from 1-deoxy-D-xylulose 5-phosphate: step 3/6. Functionally, catalyzes the phosphorylation of the position 2 hydroxy group of 4-diphosphocytidyl-2C-methyl-D-erythritol. The polypeptide is 4-diphosphocytidyl-2-C-methyl-D-erythritol kinase (Proteus mirabilis (strain HI4320)).